The following is a 245-amino-acid chain: tRNA pseudouridine synthase A (245 aa).

The active-site Nucleophile is the D52. Y111 is a binding site for substrate.

It belongs to the tRNA pseudouridine synthase TruA family. In terms of assembly, homodimer.

The enzyme catalyses uridine(38/39/40) in tRNA = pseudouridine(38/39/40) in tRNA. Its function is as follows. Formation of pseudouridine at positions 38, 39 and 40 in the anticodon stem and loop of transfer RNAs. In Thermotoga petrophila (strain ATCC BAA-488 / DSM 13995 / JCM 10881 / RKU-1), this protein is tRNA pseudouridine synthase A.